The following is a 367-amino-acid chain: UDP-N-acetylglucosamine--N-acetylmuramyl-(pentapeptide) pyrophosphoryl-undecaprenol N-acetylglucosamine transferase (367 aa).

Residues threonine 15–glycine 17, asparagine 127, arginine 163, serine 191, isoleucine 249, and glutamine 294 each bind UDP-N-acetyl-alpha-D-glucosamine.

This sequence belongs to the glycosyltransferase 28 family. MurG subfamily.

It localises to the cell inner membrane. The enzyme catalyses di-trans,octa-cis-undecaprenyl diphospho-N-acetyl-alpha-D-muramoyl-L-alanyl-D-glutamyl-meso-2,6-diaminopimeloyl-D-alanyl-D-alanine + UDP-N-acetyl-alpha-D-glucosamine = di-trans,octa-cis-undecaprenyl diphospho-[N-acetyl-alpha-D-glucosaminyl-(1-&gt;4)]-N-acetyl-alpha-D-muramoyl-L-alanyl-D-glutamyl-meso-2,6-diaminopimeloyl-D-alanyl-D-alanine + UDP + H(+). It functions in the pathway cell wall biogenesis; peptidoglycan biosynthesis. Functionally, cell wall formation. Catalyzes the transfer of a GlcNAc subunit on undecaprenyl-pyrophosphoryl-MurNAc-pentapeptide (lipid intermediate I) to form undecaprenyl-pyrophosphoryl-MurNAc-(pentapeptide)GlcNAc (lipid intermediate II). The sequence is that of UDP-N-acetylglucosamine--N-acetylmuramyl-(pentapeptide) pyrophosphoryl-undecaprenol N-acetylglucosamine transferase from Burkholderia orbicola (strain MC0-3).